The following is a 261-amino-acid chain: Small ribosomal subunit protein eS1 (261 aa).

A compositionally biased stretch (basic residues) spans 1-18 (MAVGKNKRISKGKKGGKK). A disordered region spans residues 1-21 (MAVGKNKRISKGKKGGKKKAT).

The protein belongs to the eukaryotic ribosomal protein eS1 family. As to quaternary structure, component of the small ribosomal subunit. Mature ribosomes consist of a small (40S) and a large (60S) subunit. The 40S subunit contains about 33 different proteins and 1 molecule of RNA (18S). The 60S subunit contains about 49 different proteins and 3 molecules of RNA (25S, 5.8S and 5S).

It localises to the cytoplasm. The sequence is that of Small ribosomal subunit protein eS1 (cyc07) from Daucus carota (Wild carrot).